A 610-amino-acid chain; its full sequence is MDALLQVSVDGFRFENGSGSCCKPRNNLESGNNLFPDFHESQNQSSPNDSPPTVCLDNSPVLKYINDMLMDEEDFVGISRDDLALQAAERSFYEIIQQQSPESDQNTSSSSDQNSGDQDFCFPSTTTDSSALVSSGESQRKYRHRNDEEDDLENNRRNKQPAIFVSEMEELAVKLEHVLLVCKTNQEEEEERTVITKQSTPNRAGRAKGSSNKSKTHKTNTVDLRSLLTQCAQAVASFDQRRATDKLKEIRAHSSSNGDGTQRLAFYFAEALEARITGNISPPVSNPFPSSTTSMVDILKAYKLFVHTCPIYVTDYFAANKSIYELAMKATKLHIVDFGVLYGFQWPCLLRALSKRPGGPPMLRVTGIELPQAGFRPSDRVEETGRRLKRFCDQFNVPFEFNFIAKKWETITLDELMINPGETTVVNCIHRLQYTPDETVSLDSPRDTVLKLFRDINPDLFVFAEINGMYNSPFFMTRFREALFHYSSLFDMFDTTIHAEDEYKNRSLLERELLVRDAMSVISCEGAERFARPETYKQWRVRILRAGFKPATISKQIMKEAKEIVRKRYHRDFVIDSDNNWMLQGWKGRVIYAFSCWKPAEKFTNNNLNI.

Disordered regions lie at residues 32–54, 98–159, and 186–220; these read NNLF…PPTV, QQSP…RRNK, and QEEE…HKTN. 2 stretches are compositionally biased toward low complexity: residues 41–52 and 99–119; these read SQNQSSPNDSPP and QSPE…GDQD. Composition is skewed to polar residues over residues 123 to 137 and 209 to 220; these read PSTT…SSGE and GSSNKSKTHKTN. The GRAS domain maps to 215-598; sequence KTHKTNTVDL…RVIYAFSCWK (384 aa). A leucine repeat I (LRI) region spans residues 222-283; it reads VDLRSLLTQC…ARITGNISPP (62 aa). The segment at 302–367 is VHIID; sequence YKLFVHTCPI…GGPPMLRVTG (66 aa). Residues 333–337 carry the VHIID motif; that stretch reads LHIVD. The segment at 383 to 415 is leucine repeat II (LRII); sequence ETGRRLKRFCDQFNVPFEFNFIAKKWETITLDE. The PFYRE stretch occupies residues 424 to 520; that stretch reads TVVNCIHRLQ…RELLVRDAMS (97 aa). Positions 523-598 are SAW; the sequence is SCEGAERFAR…RVIYAFSCWK (76 aa).

It belongs to the GRAS family. In terms of tissue distribution, highly expressed in roots and at lower levels in leaves and sepals. Expressed in siliques.

It is found in the nucleus. Functionally, probable transcription factor involved in plant development. The sequence is that of Scarecrow-like protein 11 (SCL11) from Arabidopsis thaliana (Mouse-ear cress).